Reading from the N-terminus, the 75-residue chain is MKNKPDDRRDNVDKIQYNITKTIQNCEFADEIIAKTDDEKTKKTLIEKNERRREALDGMREEIKDEARDKKNGYM.

A disordered region spans residues 52-75 (RREALDGMREEIKDEARDKKNGYM).

This sequence belongs to the Tlp family.

The sequence is that of Protein Tlp homolog from Clostridium botulinum (strain Okra / Type B1).